Here is a 308-residue protein sequence, read N- to C-terminus: MQIYPLRLLPNKIDFDFMNFKKVSYSFSIILSLISFIWIGIYKFNFGIDFAGGIVIEVRLDQAPDLPKMRGVLGELGIGEVVLQNFGSERDLSIRFGSSSEENLMKNIELIKASLQSNFPYKFEYRKVDFVGPQVGRQLIEAGAMAMLFSFLAIMVYIWVRFEWYFGLGILIALVHDVILALGFMSMTKLDFNLSTIAAVLTIIGYSVNDSVVIYDRIRENLRKYHKKNITEIINLSINETLSRTILTVITTLLANLALILFGGEAIRSFSVLVFFGIIAGTYSSIFISAPILTMFANRKFNKKVIER.

The next 6 helical transmembrane spans lie at 28–48 (SIIL…NFGI), 140–160 (IEAG…YIWV), 164–184 (WYFG…ALGF), 194–214 (LSTI…SVVI), 246–266 (ILTV…GGEA), and 272–292 (VLVF…SAPI).

Belongs to the SecD/SecF family. SecF subfamily. In terms of assembly, forms a complex with SecD. Part of the essential Sec protein translocation apparatus which comprises SecA, SecYEG and auxiliary proteins SecDF-YajC and YidC.

It localises to the cell inner membrane. Part of the Sec protein translocase complex. Interacts with the SecYEG preprotein conducting channel. SecDF uses the proton motive force (PMF) to complete protein translocation after the ATP-dependent function of SecA. This Rickettsia felis (strain ATCC VR-1525 / URRWXCal2) (Rickettsia azadi) protein is Protein translocase subunit SecF.